Here is a 288-residue protein sequence, read N- to C-terminus: UTP--glucose-1-phosphate uridylyltransferase (288 aa).

It belongs to the UDPGP type 2 family.

It catalyses the reaction alpha-D-glucose 1-phosphate + UTP + H(+) = UDP-alpha-D-glucose + diphosphate. It participates in glycolipid metabolism; diglucosyl-diacylglycerol biosynthesis. Catalyzes the formation of UDP-glucose from glucose-1-phosphate and UTP. This is an intermediate step in the biosynthesis of diglucosyl-diacylglycerol (Glc2-DAG), i.e. the predominant glycolipid found in the S.aureus membrane, which is also used as a membrane anchor for lipoteichoic acid (LTA). The chain is UTP--glucose-1-phosphate uridylyltransferase (gtaB) from Staphylococcus aureus (strain MRSA252).